The chain runs to 66 residues: Conotoxin Cl14.1b (66 aa).

The N-terminal stretch at 1–19 (MNVTVMFLVLLLTMPLTDG) is a signal peptide. Residues 20-47 (FNIRAINGGELFGLVQRDAGNALDHGFY) constitute a propeptide that is removed on maturation.

Belongs to the conotoxin L superfamily. Post-translationally, contains 2 disulfide bonds. In terms of tissue distribution, expressed by the venom duct.

The protein localises to the secreted. This is Conotoxin Cl14.1b from Californiconus californicus (California cone).